The sequence spans 326 residues: MIRAYEQNPQHFIEDLEKVRVEQLTGHGSSVLEELVQLVKDKNIDISIKYDPRKDSEVFANRVITDDIELLKKILAYFLPEDAILKGGHYDNQLQNGIKRVKEFLESSPNTQWELRAFMAVMHFSLTADRIDDDILKVIVDSMNHHGDARSKLREELAELTAELKIYSVIQAEINKHLSSSGTINIHDKSINLMDKNLYGYTDEEIFKASAEYKILEKMPQTTIQVDGSEKKIVSIKDFLGSENKRTGALGNLKNSYSYNKDNNELSHFATTCSDKSRPLNDLVSQKTTQLSDITSRFNSAIEALNRFIQKYDSVMQRLLDDTSGK.

The protein resides in the secreted. In terms of biological role, possibly involved in calcium regulation of YOP expression, which includes the export process. The polypeptide is Virulence-associated V antigen (lcrV) (Yersinia pestis).